The chain runs to 95 residues: Bombyxin F-1 (95 aa).

An N-terminal signal peptide occupies residues 1–19; it reads MKLVVIVLLVISVSILVSA. 3 cysteine pairs are disulfide-bonded: C29/C82, C41/C95, and C81/C86. The propeptide at 53-71 is c peptide like; that stretch reads NSDMVYEDSGMPELLPADT.

The protein belongs to the insulin family. In terms of assembly, heterodimer of a B chain and an A chain linked by two disulfide bonds.

The protein localises to the secreted. The sequence is that of Bombyxin F-1 (BBXF1) from Bombyx mori (Silk moth).